We begin with the raw amino-acid sequence, 817 residues long: Protein-glutamine gamma-glutamyltransferase K (817 aa).

Disordered stretches follow at residues 1-38 (MMDGPRSDVGRWGGNPLQPPTTPSPEPEPEPDGRSRRG) and 59-105 (DDWG…DGTI). A membrane anchorage region region spans residues 1–100 (MMDGPRSDVG…VSRGSGVNAA (100 aa)). The segment covering 17 to 26 (LQPPTTPSPE) has biased composition (pro residues). At Thr-22 the chain carries Phosphothreonine. Residues Ser-24, Ser-68, Ser-82, Ser-85, Ser-92, and Ser-95 each carry the phosphoserine modification. Residues 71-84 (RGSSSGTRRPGSRG) are compositionally biased toward low complexity. Active-site residues include Cys-377, His-436, and Asp-459. Ca(2+)-binding residues include Asn-499, Asp-501, Glu-548, and Glu-553. The disordered stretch occupies residues 793–817 (GGFFSDAGGDSHLGETIPMASRGGA).

It belongs to the transglutaminase superfamily. Transglutaminase family. In terms of assembly, interacts with PLAAT4. Ca(2+) serves as cofactor. Palmitoylated. Post-translationally, the membrane anchorage region possesses a cluster of five cysteines within which fatty acid(s) may become thioester-linked. It is subject to phorbol ester-stimulated phosphorylation and is hypersensitive to proteolysis, which releases the enzyme in a soluble form. In terms of processing, tyrosine-phosphorylated.

It localises to the membrane. The catalysed reaction is L-glutaminyl-[protein] + L-lysyl-[protein] = [protein]-L-lysyl-N(6)-5-L-glutamyl-[protein] + NH4(+). Its function is as follows. Catalyzes the cross-linking of proteins and the conjugation of polyamines to proteins. Responsible for cross-linking epidermal proteins during formation of the stratum corneum. Involved in cell proliferation. This is Protein-glutamine gamma-glutamyltransferase K (TGM1) from Homo sapiens (Human).